The sequence spans 423 residues: Gamma-glutamyl phosphate reductase (423 aa).

The protein belongs to the gamma-glutamyl phosphate reductase family.

Its subcellular location is the cytoplasm. The catalysed reaction is L-glutamate 5-semialdehyde + phosphate + NADP(+) = L-glutamyl 5-phosphate + NADPH + H(+). The protein operates within amino-acid biosynthesis; L-proline biosynthesis; L-glutamate 5-semialdehyde from L-glutamate: step 2/2. Catalyzes the NADPH-dependent reduction of L-glutamate 5-phosphate into L-glutamate 5-semialdehyde and phosphate. The product spontaneously undergoes cyclization to form 1-pyrroline-5-carboxylate. This is Gamma-glutamyl phosphate reductase from Roseiflexus castenholzii (strain DSM 13941 / HLO8).